A 314-amino-acid polypeptide reads, in one-letter code: Acetaldehyde dehydrogenase 2 (314 aa).

Position 15–18 (15–18) interacts with NAD(+); sequence SGNI. The Acyl-thioester intermediate role is filled by Cys-133. NAD(+) is bound by residues 164–172 and Asn-289; that span reads SAGPGTRQN.

Belongs to the acetaldehyde dehydrogenase family.

It carries out the reaction acetaldehyde + NAD(+) + CoA = acetyl-CoA + NADH + H(+). The chain is Acetaldehyde dehydrogenase 2 from Nocardioides sp. (strain ATCC BAA-499 / JS614).